The following is a 286-amino-acid chain: Bifunctional protein FolD (286 aa).

NADP(+)-binding positions include 165–167 (GRS) and serine 190.

The protein belongs to the tetrahydrofolate dehydrogenase/cyclohydrolase family. As to quaternary structure, homodimer.

The enzyme catalyses (6R)-5,10-methylene-5,6,7,8-tetrahydrofolate + NADP(+) = (6R)-5,10-methenyltetrahydrofolate + NADPH. It catalyses the reaction (6R)-5,10-methenyltetrahydrofolate + H2O = (6R)-10-formyltetrahydrofolate + H(+). The protein operates within one-carbon metabolism; tetrahydrofolate interconversion. Its function is as follows. Catalyzes the oxidation of 5,10-methylenetetrahydrofolate to 5,10-methenyltetrahydrofolate and then the hydrolysis of 5,10-methenyltetrahydrofolate to 10-formyltetrahydrofolate. This Paraburkholderia phytofirmans (strain DSM 17436 / LMG 22146 / PsJN) (Burkholderia phytofirmans) protein is Bifunctional protein FolD.